The following is a 780-amino-acid chain: Ral guanine nucleotide dissociation stimulator-like 2 (780 aa).

The tract at residues 1–92 is disordered; it reads MLPRPLRLLW…PTPPPRSSRR (92 aa). At Ser13 the chain carries Phosphoserine. Gly residues predominate over residues 31-42; it reads GGGPGGRGVGGG. Over residues 43 to 65 the composition is skewed to acidic residues; that stretch reads QEEEEEEEEDEAPVSVWDEEEDG. Residues 89 to 213 form the N-terminal Ras-GEF domain; the sequence is SSRRLRAGTL…GSADLIRNLR (125 aa). One can recognise a Ras-GEF domain in the interval 244–516; sequence LADHLAEQLT…HRVSCEVEPP (273 aa). Over residues 596 to 613 the composition is skewed to low complexity; the sequence is HSLADPSHLSPPASSPRP. 2 disordered regions span residues 596 to 651 and 741 to 769; these read HSLA…GASD and TATL…PRIK. The 88-residue stretch at 651–738 folds into the Ras-associating domain; sequence DCRIIRVQME…HDFLLRQRRR (88 aa). Residues 741 to 758 show a composition bias toward low complexity; sequence TATLGLTSSPSASGTPPS.

Interacts with SAMD9.

In terms of biological role, probable guanine nucleotide exchange factor. Putative effector of Ras and/or Rap. Associates with the GTP-bound form of Rap 1A and H-Ras in vitro. This is Ral guanine nucleotide dissociation stimulator-like 2 (RGL2) from Canis lupus familiaris (Dog).